The chain runs to 245 residues: 8-amino-3,8-dideoxy-manno-octulosonate cytidylyltransferase (245 aa).

It belongs to the KdsB family.

The protein resides in the cytoplasm. The catalysed reaction is 8-amino-3,8-dideoxy-alpha-D-manno-octulosonate + CTP = CMP-8-amino-3,8-dideoxy-alpha-D-manno-oct-2-ulosonate + diphosphate. The protein operates within bacterial outer membrane biogenesis; lipopolysaccharide biosynthesis. In terms of biological role, activates KDO8N (a required 8-carbon sugar) for incorporation into bacterial lipopolysaccharide in the Shewanella genus. In Shewanella amazonensis (strain ATCC BAA-1098 / SB2B), this protein is 8-amino-3,8-dideoxy-manno-octulosonate cytidylyltransferase.